Consider the following 172-residue polypeptide: Adenine phosphoribosyltransferase (172 aa).

This sequence belongs to the purine/pyrimidine phosphoribosyltransferase family. Homodimer.

It is found in the cytoplasm. It carries out the reaction AMP + diphosphate = 5-phospho-alpha-D-ribose 1-diphosphate + adenine. The protein operates within purine metabolism; AMP biosynthesis via salvage pathway; AMP from adenine: step 1/1. Catalyzes a salvage reaction resulting in the formation of AMP, that is energically less costly than de novo synthesis. The sequence is that of Adenine phosphoribosyltransferase from Pelobacter propionicus (strain DSM 2379 / NBRC 103807 / OttBd1).